The following is a 644-amino-acid chain: Zinc transporter ZIP4 (644 aa).

Positions 1–27 are cleaved as a signal peptide; sequence MAILAWLEPRPLLAVLVLVLTMRMAQP. Topologically, residues 28–323 are extracellular; sequence AHLLTLLSSG…QNQLSQAEKY (296 aa). Cystine bridges form between Cys-59–Cys-64, Cys-67–Cys-103, and Cys-153–Cys-188. The tract at residues 231-259 is disordered; the sequence is TETHSDHHHQEKRVNRQGPTPLTAPNSSS. Residues 233-244 are compositionally biased toward basic and acidic residues; the sequence is THSDHHHQEKRV. Positions 247–259 are enriched in polar residues; that stretch reads QGPTPLTAPNSSS. Cys-266 and Cys-305 are joined by a disulfide. The helical transmembrane segment at 324–344 threads the bilayer; sequence LYGSLATLLICLCSTFGLLLL. At 345 to 355 the chain is on the cytoplasmic side; the sequence is TCAACSTAAHY. Residues 356–376 form a helical membrane-spanning segment; the sequence is VIQTFLGMAVGALTGDALLHL. The Extracellular segment spans residues 377–404; that stretch reads TPKVLGLHQHGGDSEHRADSHGPQTTWR. The chain crosses the membrane as a helical span at residues 405 to 425; that stretch reads LVVALSGLYVFFLFEKLCDLL. Over 426–495 the chain is Cytoplasmic; it reads LPQDPEDRKG…KSPELRLLPY (70 aa). Residues 449–451 carry the Essential for SLC39A4 endocytosis motif; sequence LQL. Over residues 456-467 the composition is skewed to basic and acidic residues; it reads LRPPKQPHEGSR. The segment at 456-484 is disordered; the sequence is LRPPKQPHEGSRADLVAEESPELLSPEPR. A helical membrane pass occupies residues 496 to 515; the sequence is MITLGDGLHNFADGLAVGAA. Zn(2+) is bound by residues His-504, Asn-505, and Asp-508. The Extracellular segment spans residues 516–523; it reads FASSWKTG. Residues 524-550 traverse the membrane as a helical segment; it reads LATSLAVFCHEVPHELGDFAALLHAGL. His-533, Glu-534, and His-537 together coordinate Zn(2+). At 551-555 the chain is on the cytoplasmic side; that stretch reads PVSRA. A helical membrane pass occupies residues 556–576; the sequence is LLLNLASGLTAFAGLYVALAL. The Extracellular portion of the chain corresponds to 577–583; that stretch reads GVGEESE. The chain crosses the membrane as a helical span at residues 584–604; it reads SWTLAVAIGLFLYVALCDMLP. Over 605–614 the chain is Cytoplasmic; it reads AMLNVRDPRP. The chain crosses the membrane as a helical span at residues 615–635; it reads WLLFLLHNVGLLGGWAVLLLL. Residues 636–644 are Extracellular-facing; that stretch reads SLYEDSIAL.

The protein belongs to the ZIP transporter (TC 2.A.5) family. Homodimer. The extracellular N-terminal ectodomain is cleaved when cells are Zn(2+) deficient, N-terminally cleaved SLC39A4 is internalized at a faster rate. In terms of processing, under excess Zn(2+) conditions, SLC39A4 on the cell surface is rapidly endocytosed, ubiquitinated and degraded. Post-translationally, glycosylated.

It is found in the cell membrane. The protein resides in the recycling endosome membrane. The protein localises to the apical cell membrane. The enzyme catalyses Zn(2+)(in) = Zn(2+)(out). Functionally, selective transporter that mediates the uptake of Zn(2+). Plays an essential role for dietary zinc uptake from small intestine. The Zn(2+) uniporter activity is regulated by zinc availability. Also exhibits polyspecific binding and transport of Cu(2+), Cd(2+) and possibly Ni(2+) but at higher concentrations. The chain is Zinc transporter ZIP4 from Pteropus alecto (Black flying fox).